A 1020-amino-acid chain; its full sequence is Protein translocase subunit SecA (1020 aa).

Residues Gln-143, 161-165 (GEGKT), and Asp-661 each bind ATP. Residues 974–1020 (SVYNASPGAENEAPLQRPVTADSKPGRNDPCPCGSGKKYKNCHGQQP) are disordered. Zn(2+)-binding residues include Cys-1004, Cys-1006, Cys-1015, and His-1016.

Belongs to the SecA family. In terms of assembly, monomer and homodimer. Part of the essential Sec protein translocation apparatus which comprises SecA, SecYEG and auxiliary proteins SecDF. Other proteins may also be involved. It depends on Zn(2+) as a cofactor.

The protein localises to the cell inner membrane. Its subcellular location is the cytoplasm. The enzyme catalyses ATP + H2O + cellular proteinSide 1 = ADP + phosphate + cellular proteinSide 2.. Functionally, part of the Sec protein translocase complex. Interacts with the SecYEG preprotein conducting channel. Has a central role in coupling the hydrolysis of ATP to the transfer of proteins into and across the cell membrane, serving as an ATP-driven molecular motor driving the stepwise translocation of polypeptide chains across the membrane. The polypeptide is Protein translocase subunit SecA (Chlorobium phaeovibrioides (strain DSM 265 / 1930) (Prosthecochloris vibrioformis (strain DSM 265))).